A 378-amino-acid polypeptide reads, in one-letter code: Anhydro-N-acetylmuramic acid kinase 2 (378 aa).

Position 14 to 22 (G14 to D22) interacts with ATP.

This sequence belongs to the anhydro-N-acetylmuramic acid kinase family.

The enzyme catalyses 1,6-anhydro-N-acetyl-beta-muramate + ATP + H2O = N-acetyl-D-muramate 6-phosphate + ADP + H(+). Its pathway is amino-sugar metabolism; 1,6-anhydro-N-acetylmuramate degradation. It participates in cell wall biogenesis; peptidoglycan recycling. In terms of biological role, catalyzes the specific phosphorylation of 1,6-anhydro-N-acetylmuramic acid (anhMurNAc) with the simultaneous cleavage of the 1,6-anhydro ring, generating MurNAc-6-P. Is required for the utilization of anhMurNAc either imported from the medium or derived from its own cell wall murein, and thus plays a role in cell wall recycling. This Jannaschia sp. (strain CCS1) protein is Anhydro-N-acetylmuramic acid kinase 2.